Here is a 158-residue protein sequence, read N- to C-terminus: Cyclic pyranopterin monophosphate synthase (158 aa).

Substrate-binding positions include 76-78 (LCH) and 114-115 (ME). The active site involves Asp129.

The protein belongs to the MoaC family. As to quaternary structure, homohexamer; trimer of dimers.

It carries out the reaction (8S)-3',8-cyclo-7,8-dihydroguanosine 5'-triphosphate = cyclic pyranopterin phosphate + diphosphate. The protein operates within cofactor biosynthesis; molybdopterin biosynthesis. In terms of biological role, catalyzes the conversion of (8S)-3',8-cyclo-7,8-dihydroguanosine 5'-triphosphate to cyclic pyranopterin monophosphate (cPMP). The chain is Cyclic pyranopterin monophosphate synthase from Shewanella loihica (strain ATCC BAA-1088 / PV-4).